The following is a 210-amino-acid chain: MDNCLAAAALNGVDRRSLQRSARLALEVLERAKRRAVDWHALERPKGCMGVLAREAPHLEKQPAAGPQRVLPGEREERPPTLSASFRTMAEFMDYTSSQCGKYYSSVPEEGGATHVYRYHRGESKLHMCLDIGNGQRKDRKKTSLGPGGSYQISEHAPEASQPAENISKDLYIEVYPGTYSVTVGSNDLTKKTHVVAVDSGQSVDLVFPV.

Disordered stretches follow at residues 58 to 80 (HLEK…ERPP) and 136 to 162 (QRKD…EASQ).

Interacts with PRKACA and RELA. Expressed at high levels in adult heart and at lower levels in brain, testis, ovary and skeletal muscle. Up-regulated in some breast cancer cell lines. Isoform 1 and isoform 3 are expressed in fetal brain.

Its subcellular location is the nucleus. Enhances NF-kappa-B transcriptional activity by regulating the nuclear localization of the NF-kappa-B subunit RELA and promoting the phosphorylation of RELA by PRKACA. Regulates the effect of the cAMP-dependent protein kinase signaling pathway on the NF-kappa-B activation cascade. In Homo sapiens (Human), this protein is A-kinase-interacting protein 1 (AKIP1).